The following is a 1147-amino-acid chain: MASSSSSPSSRRYDVFPSFSGVDVRKTFLSHLIEALDRRSINTFMDHGIVRSCIIADALITAIREARISIVIFSENYASSTWCLNELVEIHKCYKKGEQMVIPVFYGVDPSHVRKQIGGFGDVFKKTCEDKPEDQKQRWVKALTDISNLAGEDLRNGPTEAFMVKKIANDVSNKLFPLPKGFGDFVGIEDHIKAIKSILCLESKEARIMVGIWGQSGIGKSTIGRALFSQLSSQFHHRAFITYKSTSGSDVSGMKLSWEKELLSEILGQKDIKIDHFGVVEQRLKHKKVLILLDDVDNLEFLKTLVGKAEWFGSGSRIIVITQDKQLLKAHEIDLVYEVELPSQGLALKMISQYAFGKDSPPDDFKELAFEVAELVGSLPLGLSVLGSSLKGRDKDEWVKMMPRLRNDSDDKIEETLRVGYDRLNKKNRELFKCIACFFNGFKVSNVKELLEDDVGLTMLADKSLIRITPDGDIEMHNLLEKLGREIDRAKSKGNPAKRQFLTNFEDIQEVVTEKTGTETVLGIRVPPTVLFSTRPLLVINEESFKGMRNLQYLEIGHWSEIGLWSEIGLWSKIDLPQGLVYLPLKLKLLKWNYCPLKSLPSTFKAEYLVNLIMKYSKLEKLWEGTLPLGSLKKMDLGCSNNLKEIPDLSLAINLEELNLSKCESLVTLPSSIQNAIKLRTLYCSGVLLIDLKSLEGMCNLEYLSVDWSSMEGTQGLIYLPRKLKRLWWDYCPVKRLPSNFKAEYLVELRMENSDLEKLWDGTQPLGSLKEMYLHGSKYLKEIPDLSLAINLERLYLFGCESLVTLPSSIQNATKLINLDMRDCKKLESFPTDLNLESLEYLNLTGCPNLRNFPAIKMGCSYFEILQDRNEIEVEDCFWNKNLPAGLDYLDCLMRCMPCEFRPEYLTFLDVSGCKHEKLWEGIQSLGSLKRMDLSESENLTEIPDLSKATNLKRLYLNGCKSLVTLPSTIGNLHRLVRLEMKECTGLELLPTDVNLSSLIILDLSGCSSLRTFPLISTRIECLYLENTAIEEVPCCIEDLTRLSVLLMYCCQRLKNISPNIFRLTSLMVADFTDCRGVIKALSDATVVATMEDHVSCVPLSENIEYTCERFWDELYERNSRSIFSYKDEDGDVYWVNWDLMMMLMLI.

A TIR domain is found at 11 to 175 (RRYDVFPSFS…KIANDVSNKL (165 aa)). The active site involves glutamate 86. The 258-residue stretch at 189 to 446 (EDHIKAIKSI…CFFNGFKVSN (258 aa)) folds into the NB-ARC domain. LRR repeat units follow at residues 548–573 (MRNL…LWSK), 584–606 (PLKL…TFKA), 608–629 (YLVN…TLPL), 630–653 (GSLK…SLAI), 655–676 (LEEL…IQNA), 698–721 (MCNL…IYLP), 722–743 (RKLK…NFKA), 744–766 (EYLV…TQPL), 767–790 (GSLK…SLAI), 792–813 (LERL…IQNA), 814–836 (TKLI…DLNL), 837–860 (ESLE…KMGC), 926–950 (LGSL…SKAT), 952–973 (LKRL…IGNL), 974–996 (HRLV…DVNL), 997–1017 (SSLI…PLIS), 1018–1042 (TRIE…DLTR), and 1044–1064 (SVLL…IFRL).

Interacts with RSH1.

It carries out the reaction NAD(+) + H2O = ADP-D-ribose + nicotinamide + H(+). In terms of biological role, TIR-NB-LRR receptor-like protein that confers resistance to the pathogen Hyaloperonospora arabidopsis isolates Emoy2 and Emwa1 (downy mildew disease). Plays a role in the regulation of temperature response during plant growth and survival. This chain is Disease resistance protein RPP4, found in Arabidopsis thaliana (Mouse-ear cress).